We begin with the raw amino-acid sequence, 85 residues long: U4-theraphotoxin-Hhn1ad (85 aa).

The N-terminal stretch at 1–22 (MKVTLIAILTCAAVLVLHTTAA) is a signal peptide. Positions 23 to 48 (EELKTESQLMEVGMPDTELATVDEER) are excised as a propeptide. 3 disulfides stabilise this stretch: C52–C66, C56–C77, and C71–C82.

The protein belongs to the neurotoxin 12 (Hwtx-2) family. 02 (Hwtx-2) subfamily. Expressed by the venom gland.

The protein resides in the secreted. In terms of biological role, postsynaptic neurotoxin. In Cyriopagopus hainanus (Chinese bird spider), this protein is U4-theraphotoxin-Hhn1ad.